Reading from the N-terminus, the 150-residue chain is uncharacterized protein (150 aa).

A run of 3 helical transmembrane segments spans residues 50 to 70 (VVSV…VIHL), 80 to 100 (LYIT…QLWL), and 127 to 147 (KVVI…FFIE).

It localises to the membrane. This is an uncharacterized protein from Schizosaccharomyces pombe (strain 972 / ATCC 24843) (Fission yeast).